Reading from the N-terminus, the 262-residue chain is Carbonic anhydrase 13 (262 aa).

The region spanning 4-261 (LSWGYREHNG…LKGRKVRASF (258 aa)) is the Alpha-carbonic anhydrase domain. The active-site Proton donor/acceptor is the H65. 3 residues coordinate Zn(2+): H95, H97, and H120. Substrate is bound at residue 200–201 (TV).

Belongs to the alpha-carbonic anhydrase family. Zn(2+) serves as cofactor. Expressed in thymus, small intestine, spleen, prostate, ovary, colon and testis.

It catalyses the reaction hydrogencarbonate + H(+) = CO2 + H2O. Its activity is regulated as follows. Inhibited by acetazolamide. In terms of biological role, reversible hydration of carbon dioxide. In Homo sapiens (Human), this protein is Carbonic anhydrase 13 (CA13).